Here is a 310-residue protein sequence, read N- to C-terminus: Nucleotide-binding protein MAP_1147 (310 aa).

Position 30-37 (30-37 (GLSGAGRG)) interacts with ATP. 81–84 (DVRS) is a binding site for GTP.

The protein belongs to the RapZ-like family.

Displays ATPase and GTPase activities. The polypeptide is Nucleotide-binding protein MAP_1147 (Mycolicibacterium paratuberculosis (strain ATCC BAA-968 / K-10) (Mycobacterium paratuberculosis)).